The primary structure comprises 181 residues: CDP-archaeol synthase (181 aa).

The next 5 helical transmembrane spans lie at 7 to 27 (VVVA…AVLA), 55 to 75 (AVGT…RPAA), 80 to 100 (GVVL…GAMV), 128 to 148 (FVVV…GDTF), and 150 to 170 (LPVL…TNGI).

The protein belongs to the CDP-archaeol synthase family. The cofactor is Mg(2+).

It is found in the cell membrane. The enzyme catalyses 2,3-bis-O-(geranylgeranyl)-sn-glycerol 1-phosphate + CTP + H(+) = CDP-2,3-bis-O-(geranylgeranyl)-sn-glycerol + diphosphate. It participates in membrane lipid metabolism; glycerophospholipid metabolism. Its function is as follows. Catalyzes the formation of CDP-2,3-bis-(O-geranylgeranyl)-sn-glycerol (CDP-archaeol) from 2,3-bis-(O-geranylgeranyl)-sn-glycerol 1-phosphate (DGGGP) and CTP. This reaction is the third ether-bond-formation step in the biosynthesis of archaeal membrane lipids. This Halobacterium salinarum (strain ATCC 29341 / DSM 671 / R1) protein is CDP-archaeol synthase.